The chain runs to 506 residues: Histidine ammonia-lyase (506 aa).

Positions Ala143 to Gly145 form a cross-link, 5-imidazolinone (Ala-Gly). At Ser144 the chain carries 2,3-didehydroalanine (Ser).

It belongs to the PAL/histidase family. In terms of processing, contains an active site 4-methylidene-imidazol-5-one (MIO), which is formed autocatalytically by cyclization and dehydration of residues Ala-Ser-Gly.

The protein localises to the cytoplasm. The enzyme catalyses L-histidine = trans-urocanate + NH4(+). It functions in the pathway amino-acid degradation; L-histidine degradation into L-glutamate; N-formimidoyl-L-glutamate from L-histidine: step 1/3. The sequence is that of Histidine ammonia-lyase from Salmonella paratyphi B (strain ATCC BAA-1250 / SPB7).